A 340-amino-acid chain; its full sequence is Methionine import ATP-binding protein MetN 2 (340 aa).

An ABC transporter domain is found at 2 to 241 (ITLQNVVKEY…PKEKVTQRFV (240 aa)). 38–45 (GYSGAGKS) serves as a coordination point for ATP.

This sequence belongs to the ABC transporter superfamily. Methionine importer (TC 3.A.1.24) family. In terms of assembly, the complex is composed of two ATP-binding proteins (MetN), two transmembrane proteins (MetI) and a solute-binding protein (MetQ).

It localises to the cell membrane. The catalysed reaction is L-methionine(out) + ATP + H2O = L-methionine(in) + ADP + phosphate + H(+). It catalyses the reaction D-methionine(out) + ATP + H2O = D-methionine(in) + ADP + phosphate + H(+). Part of the ABC transporter complex MetNIQ involved in methionine import. Responsible for energy coupling to the transport system. The protein is Methionine import ATP-binding protein MetN 2 of Listeria innocua serovar 6a (strain ATCC BAA-680 / CLIP 11262).